Here is a 360-residue protein sequence, read N- to C-terminus: WAT1-related protein At3g28070 (360 aa).

Transmembrane regions (helical) follow at residues 15–35 (AVFL…STLF), 45–65 (IYPF…PSLF), 84–104 (IGLL…GIEY), 108–128 (TLAS…AIIF), 140–160 (SLAK…VIFY), 190–210 (WLIG…SFIL), 224–244 (VSFL…LVVE), 248–268 (PSVW…MAIV), 286–306 (LYLA…GAIF), and 311–331 (LYLG…AVMW). In terms of domain architecture, EamA spans 30–158 (GISTLFKFAT…LSLIGALVVI (129 aa)).

The protein belongs to the drug/metabolite transporter (DMT) superfamily. Plant drug/metabolite exporter (P-DME) (TC 2.A.7.4) family.

Its subcellular location is the membrane. This is WAT1-related protein At3g28070 from Arabidopsis thaliana (Mouse-ear cress).